The primary structure comprises 274 residues: N-acetylmuramic acid 6-phosphate etherase (274 aa).

Residues 52–215 (IIPRMEQGGR…STSIMIRLGR (164 aa)) form the SIS domain. The active-site Proton donor is Glu-80. Glu-111 is an active-site residue.

It belongs to the GCKR-like family. MurNAc-6-P etherase subfamily. As to quaternary structure, homodimer.

The catalysed reaction is N-acetyl-D-muramate 6-phosphate + H2O = N-acetyl-D-glucosamine 6-phosphate + (R)-lactate. The protein operates within amino-sugar metabolism; N-acetylmuramate degradation. Its function is as follows. Specifically catalyzes the cleavage of the D-lactyl ether substituent of MurNAc 6-phosphate, producing GlcNAc 6-phosphate and D-lactate. The sequence is that of N-acetylmuramic acid 6-phosphate etherase from Porphyromonas gingivalis (strain ATCC BAA-308 / W83).